A 428-amino-acid polypeptide reads, in one-letter code: Serine--tRNA ligase (428 aa).

234–236 (TAE) is an L-serine binding site. Position 265–267 (265–267 (RRE)) interacts with ATP. E288 is a binding site for L-serine. 352–355 (EISS) is an ATP binding site. Residue S388 coordinates L-serine.

It belongs to the class-II aminoacyl-tRNA synthetase family. Type-1 seryl-tRNA synthetase subfamily. Homodimer. The tRNA molecule binds across the dimer.

The protein resides in the cytoplasm. It catalyses the reaction tRNA(Ser) + L-serine + ATP = L-seryl-tRNA(Ser) + AMP + diphosphate + H(+). The catalysed reaction is tRNA(Sec) + L-serine + ATP = L-seryl-tRNA(Sec) + AMP + diphosphate + H(+). Its pathway is aminoacyl-tRNA biosynthesis; selenocysteinyl-tRNA(Sec) biosynthesis; L-seryl-tRNA(Sec) from L-serine and tRNA(Sec): step 1/1. Functionally, catalyzes the attachment of serine to tRNA(Ser). Is also able to aminoacylate tRNA(Sec) with serine, to form the misacylated tRNA L-seryl-tRNA(Sec), which will be further converted into selenocysteinyl-tRNA(Sec). In Synechococcus elongatus (strain ATCC 33912 / PCC 7942 / FACHB-805) (Anacystis nidulans R2), this protein is Serine--tRNA ligase.